Reading from the N-terminus, the 132-residue chain is Small ribosomal subunit protein uS11 (132 aa).

The segment at 113–132 (VTPIPHDGTRAPGGKRGRRV) is disordered.

The protein belongs to the universal ribosomal protein uS11 family. In terms of assembly, part of the 30S ribosomal subunit.

Its function is as follows. Located on the platform of the 30S subunit. The polypeptide is Small ribosomal subunit protein uS11 (Methanocella arvoryzae (strain DSM 22066 / NBRC 105507 / MRE50)).